A 397-amino-acid chain; its full sequence is Phosphoglycerate kinase (397 aa).

Substrate-binding positions include 23-25, Arg38, 61-64, Arg122, and Arg155; these read DFN and HMGK. Residues Lys206, Gly296, Glu327, and 353–356 contribute to the ATP site; that span reads GGDS.

This sequence belongs to the phosphoglycerate kinase family. In terms of assembly, monomer.

The protein localises to the cytoplasm. It catalyses the reaction (2R)-3-phosphoglycerate + ATP = (2R)-3-phospho-glyceroyl phosphate + ADP. It functions in the pathway carbohydrate degradation; glycolysis; pyruvate from D-glyceraldehyde 3-phosphate: step 2/5. The polypeptide is Phosphoglycerate kinase (Clostridium perfringens (strain SM101 / Type A)).